A 190-amino-acid polypeptide reads, in one-letter code: MTDTTVEAPATPRLKQKYNEQIVPELEKEFHYSNPMQVARVQKVVVSMGVGAAARDSKLIEGAVKDLTLITGQKPKITKAKKSVAQFHLREGQAIGAYVTLRGERMWEFLDRLLTMALPRIRDFRGINGDQFDGQGNYNFGLTEQSMFHEIDPDSIDHQRGMDITVVTSTKDDKEARVLLKHLGFPFKEN.

This sequence belongs to the universal ribosomal protein uL5 family. Part of the 50S ribosomal subunit; part of the 5S rRNA/L5/L18/L25 subcomplex. Contacts the 5S rRNA and the P site tRNA. Forms a bridge to the 30S subunit in the 70S ribosome.

This is one of the proteins that bind and probably mediate the attachment of the 5S RNA into the large ribosomal subunit, where it forms part of the central protuberance. In the 70S ribosome it contacts protein S13 of the 30S subunit (bridge B1b), connecting the 2 subunits; this bridge is implicated in subunit movement. Contacts the P site tRNA; the 5S rRNA and some of its associated proteins might help stabilize positioning of ribosome-bound tRNAs. The protein is Large ribosomal subunit protein uL5 of Bifidobacterium adolescentis (strain ATCC 15703 / DSM 20083 / NCTC 11814 / E194a).